A 292-amino-acid chain; its full sequence is tRNA-splicing endonuclease (292 aa).

Residues Tyr231, His238, and Lys267 contribute to the active site.

This sequence belongs to the tRNA-intron endonuclease family. Archaeal long subfamily. Homodimer.

The enzyme catalyses pretRNA = a 3'-half-tRNA molecule with a 5'-OH end + a 5'-half-tRNA molecule with a 2',3'-cyclic phosphate end + an intron with a 2',3'-cyclic phosphate and a 5'-hydroxyl terminus.. In terms of biological role, endonuclease that removes tRNA introns. Cleaves pre-tRNA at the 5'- and 3'-splice sites to release the intron. The products are an intron and two tRNA half-molecules bearing 2',3' cyclic phosphate and 5'-OH termini. Recognizes a pseudosymmetric substrate in which 2 bulged loops of 3 bases are separated by a stem of 4 bp. This is tRNA-splicing endonuclease from Thermoplasma volcanium (strain ATCC 51530 / DSM 4299 / JCM 9571 / NBRC 15438 / GSS1).